A 315-amino-acid chain; its full sequence is Calumenin-A (315 aa).

The first 19 residues, 1-19, serve as a signal peptide directing secretion; the sequence is MEIRPLLMCFALCVVYATS. EF-hand domains are found at residues 68–103, 104–139, 151–186, 188–223, 229–264, and 265–300; these read ESKR…AQKK, YIYE…TYLD, HMMA…EEYD, MKDI…HEDE, WVAT…SDYD, and HAEA…FVGS. Ca(2+)-binding residues include D81, D83, D85, E92, D117, N119, D121, M123, and E128. N-linked (GlcNAc...) asparagine glycosylation occurs at N131. Ca(2+) is bound by residues D164, N166, D168, E175, D201, N203, D205, E212, D242, N244, D246, K248, E253, D278, N280, D282, K284, and E289. The short motif at 312–315 is the Prevents secretion from ER element; the sequence is HDEF.

This sequence belongs to the CREC family. Interacts with ggcx.

It localises to the endoplasmic reticulum membrane. The protein resides in the golgi apparatus. The protein localises to the secreted. Its subcellular location is the melanosome. It is found in the sarcoplasmic reticulum lumen. Involved in regulation of vitamin K-dependent carboxylation of multiple N-terminal glutamate residues. Seems to inhibit gamma-carboxylase ggcx. Binds 7 calcium ions with a low affinity. This is Calumenin-A (calua) from Salmo salar (Atlantic salmon).